Reading from the N-terminus, the 326-residue chain is Phosphatidylinositol:ceramide inositolphosphotransferase (326 aa).

6 helical membrane-spanning segments follow: residues Leu33–Tyr53, Ser82–His102, Val115–Leu135, Val169–Val189, Arg199–Ser219, and His222–Asp242. Residue His181 is part of the active site. Residues His222 and Asp226 contribute to the active site. The tract at residues Met306 to Thr326 is disordered. Residues His316–Thr326 are compositionally biased toward polar residues.

It belongs to the sphingomyelin synthase family.

It is found in the golgi apparatus. The protein resides in the trans-Golgi network membrane. In terms of biological role, catalyzes the transfer of the phosphorylinositol group from phosphatidylinositol (PI) to phytoceramide, an essential step in sphingolipid biosynthesis. May play an important role in modulating plant programmed cell death (PCD) associated with defense (e.g. toward Golovinomyces cichoracearum) by promoting sphingolipid metabolism and regulating ceramide accumulation. The polypeptide is Phosphatidylinositol:ceramide inositolphosphotransferase (ERH1) (Oryza sativa subsp. indica (Rice)).